Consider the following 647-residue polypeptide: DNA ligase (647 aa).

Residues 30–34 (DEEYD), 79–80 (SM), and glutamate 106 contribute to the NAD(+) site. Lysine 108 (N6-AMP-lysine intermediate) is an active-site residue. 3 residues coordinate NAD(+): arginine 129, glutamate 163, and lysine 301. Residues cysteine 395, cysteine 398, cysteine 411, and cysteine 416 each contribute to the Zn(2+) site. Positions 569-647 (SISNALSGKT…SEYERLKLEV (79 aa)) constitute a BRCT domain.

Belongs to the NAD-dependent DNA ligase family. LigA subfamily. The cofactor is Mg(2+). It depends on Mn(2+) as a cofactor.

It carries out the reaction NAD(+) + (deoxyribonucleotide)n-3'-hydroxyl + 5'-phospho-(deoxyribonucleotide)m = (deoxyribonucleotide)n+m + AMP + beta-nicotinamide D-nucleotide.. Its function is as follows. DNA ligase that catalyzes the formation of phosphodiester linkages between 5'-phosphoryl and 3'-hydroxyl groups in double-stranded DNA using NAD as a coenzyme and as the energy source for the reaction. It is essential for DNA replication and repair of damaged DNA. The polypeptide is DNA ligase (Campylobacter concisus (strain 13826)).